A 419-amino-acid polypeptide reads, in one-letter code: Putative zinc metalloprotease spyM18_2031 (419 aa).

Histidine 18 is a binding site for Zn(2+). Glutamate 19 is a catalytic residue. Histidine 22 serves as a coordination point for Zn(2+). The next 4 membrane-spanning stretches (helical) occupy residues 169-191 (LITN…ILLV), 301-323 (LAWS…FSLN), 343-365 (LESV…LIPI), and 392-411 (AYIT…AVTW). The PDZ domain occupies 175–274 (GPMNNFILGI…LKTVAVKPQK (100 aa)).

The protein belongs to the peptidase M50B family. Zn(2+) serves as cofactor.

The protein localises to the cell membrane. The chain is Putative zinc metalloprotease spyM18_2031 from Streptococcus pyogenes serotype M18 (strain MGAS8232).